The chain runs to 250 residues: Cell division protein ZapD (250 aa).

It belongs to the ZapD family. In terms of assembly, interacts with FtsZ.

The protein localises to the cytoplasm. Cell division factor that enhances FtsZ-ring assembly. Directly interacts with FtsZ and promotes bundling of FtsZ protofilaments, with a reduction in FtsZ GTPase activity. In Yersinia enterocolitica serotype O:8 / biotype 1B (strain NCTC 13174 / 8081), this protein is Cell division protein ZapD.